Consider the following 329-residue polypeptide: NADH-quinone oxidoreductase subunit H (329 aa).

Helical transmembrane passes span 9-29, 42-62, 75-95, 117-137, 154-174, 188-208, 238-258, 269-291, and 309-329; these read LIKILILVAVFSALGGFATYI, GPCYVGPFGLLQVAADGIKLF, FIFTLAPIIAMVSAFVSMAPI, IGFLFFLAVGAAGIYAPILAG, IQLLSFEVVSTLTILAPLMVV, GGFLDWLVFKQPLAFVLFLIA, LKWGMFFLAEYAHLFAFSFVI, WGFIPGGIAILIKAGFFVFLSMW, and WKIMLPLALLNIVLTGIIILI.

The protein belongs to the complex I subunit 1 family. As to quaternary structure, NDH-1 is composed of 14 different subunits. Subunits NuoA, H, J, K, L, M, N constitute the membrane sector of the complex.

It localises to the cell inner membrane. The catalysed reaction is a quinone + NADH + 5 H(+)(in) = a quinol + NAD(+) + 4 H(+)(out). Its function is as follows. NDH-1 shuttles electrons from NADH, via FMN and iron-sulfur (Fe-S) centers, to quinones in the respiratory chain. The immediate electron acceptor for the enzyme in this species is believed to be ubiquinone. Couples the redox reaction to proton translocation (for every two electrons transferred, four hydrogen ions are translocated across the cytoplasmic membrane), and thus conserves the redox energy in a proton gradient. This subunit may bind ubiquinone. In Helicobacter pylori (strain Shi470), this protein is NADH-quinone oxidoreductase subunit H.